The chain runs to 689 residues: Armadillo-like helical domain-containing protein 3 (689 aa).

Residues 520 to 538 (IFQLALQVVNLFNMFITYG) form a helical membrane-spanning segment.

It belongs to the ARMH3 family.

Its subcellular location is the golgi apparatus membrane. It localises to the cytoplasm. May be involved in Golgi maintenance and protein secretion. This chain is Armadillo-like helical domain-containing protein 3, found in Danio rerio (Zebrafish).